Reading from the N-terminus, the 819-residue chain is Zinc finger protein 27 (819 aa).

A KRAB domain is found at 1 to 75; that stretch reads MDVTIDFSRE…KTLGAESCHD (75 aa). The interval 93 to 123 is disordered; that stretch reads PKRPRHWDPPEDEPKHSSDLQTHDESNGLKR. Positions 98–120 are enriched in basic and acidic residues; the sequence is HWDPPEDEPKHSSDLQTHDESNG. 21 consecutive C2H2-type zinc fingers follow at residues 205 to 227, 233 to 255, 261 to 283, 289 to 311, 317 to 339, 345 to 367, 401 to 423, 429 to 451, 457 to 479, 485 to 507, 513 to 535, 541 to 563, 569 to 591, 597 to 619, 625 to 647, 653 to 675, 681 to 703, 709 to 731, 737 to 759, 765 to 787, and 793 to 815; these read YVCV…QKTH, YKCG…RRIH, YDCS…QKIH, HGCV…QKIH, YVCI…RRIH, YACD…QRIH, SICA…QRTH, YQCG…RRIH, YVCV…QVIH, YQCG…KRIH, YVCS…QKTH, YVCA…QRIH, YGCS…EKIH, YGCR…QKIH, HVCA…QRIH, YGCT…RPIH, YVCA…QKTH, YACS…HRIH, YDCG…QRIH, YRCA…QTTH, and YKCV…ENVH.

It belongs to the krueppel C2H2-type zinc-finger protein family.

The protein localises to the nucleus. Its function is as follows. May be involved in transcriptional regulation. This Mus musculus (Mouse) protein is Zinc finger protein 27 (Zfp27).